A 584-amino-acid chain; its full sequence is Outer membrane transporter CdiB-2 (584 aa).

The first 20 residues, 1-20 (MATRFAILPVTALITLTAQA), serve as a signal peptide directing secretion. The span at 24–44 (PTPNDQAAAARANAEQNQQAQ) shows a compositional bias: low complexity. Residues 24–72 (PTPNDQAAAARANAEQNQQAQQRRDAQQRDATVQAPGVRSDVPRPEAYP) are disordered. The POTRA domain occupies 98–171 (SKAQGASALP…GALKLALIPG (74 aa)).

This sequence belongs to the TPS (TC 1.B.20) family.

Its subcellular location is the cell outer membrane. In terms of biological role, potential outer membrane protein component of a toxin-immunity protein module, which functions as a cellular contact-dependent growth inhibition (CDI) system. CDI modules allow bacteria to communicate with and inhibit the growth of closely related neighboring bacteria in a contact-dependent fashion. This protein may be required for secretion and assembly of the CdiA toxin protein. Expression of this cdiAIB locus in B.thailandensis confers protection against other bacteria carrying the locus; growth inhibition requires cellular contact. Its function is as follows. Probable member of a two partner secretion pathway (TPS) in which it mediates the secretion of CdiA2. The protein is Outer membrane transporter CdiB-2 (cdiB2) of Burkholderia pseudomallei (strain 1026b).